We begin with the raw amino-acid sequence, 251 residues long: uncharacterized protein (251 aa).

Disordered regions lie at residues 1–92 (MGRP…PGSA) and 137–251 (KPTP…LRTH). Residues 69–92 (AEGAPALLGGSPSSGSPGHPPGSA) show a composition bias toward low complexity. The span at 155-172 (SESSWQLPQLPAGSTSGS) shows a compositional bias: polar residues.

This is an uncharacterized protein from Homo sapiens (Human).